The chain runs to 254 residues: Geranylgeranylglyceryl phosphate synthase (254 aa).

D27 and S56 together coordinate Mg(2+). Sn-glycerol 1-phosphate contacts are provided by residues 174–180, 212–213, and 234–235; these read YLEAGSG, GG, and GT.

Belongs to the GGGP/HepGP synthase family. Group II subfamily. In terms of assembly, homohexamer. The cofactor is Mg(2+).

The protein localises to the cytoplasm. It carries out the reaction sn-glycerol 1-phosphate + (2E,6E,10E)-geranylgeranyl diphosphate = sn-3-O-(geranylgeranyl)glycerol 1-phosphate + diphosphate. Its pathway is membrane lipid metabolism; glycerophospholipid metabolism. Prenyltransferase that catalyzes the transfer of the geranylgeranyl moiety of geranylgeranyl diphosphate (GGPP) to the C3 hydroxyl of sn-glycerol-1-phosphate (G1P). This reaction is the first ether-bond-formation step in the biosynthesis of archaeal membrane lipids. This chain is Geranylgeranylglyceryl phosphate synthase, found in Aeropyrum pernix (strain ATCC 700893 / DSM 11879 / JCM 9820 / NBRC 100138 / K1).